The sequence spans 232 residues: MSENETSKTGGNAGVPGSGADAPSLSDSPAISGNDAVNLAAEQAKNTAHRNIPTLDDLPIPEDTANLRLGPNLHDGLLALLPLVGVWRGEGQADTPEGGQYSFGQQIIFSHDGENYLSFESRVWRLDSEGGTVGPDQRETGFWRINLQDEIEFVCAHASGVVEIYYGQPINERAWELESASTMVTATGPVTLGPGKRLYGLLPTNELGWVDERLVDKELKPRMSAQLHRIIG.

Residues 1–10 (MSENETSKTG) show a composition bias toward polar residues. The segment at 1–33 (MSENETSKTGGNAGVPGSGADAPSLSDSPAISG) is disordered. The GXWXGXG motif lies at 85 to 91 (GVWRGEG).

Belongs to the nitrobindin family.

This chain is Ferric nitrobindin-like protein, found in Corynebacterium efficiens (strain DSM 44549 / YS-314 / AJ 12310 / JCM 11189 / NBRC 100395).